Consider the following 178-residue polypeptide: MARLYETYKKDIVPKMMEKFQYDNIMQVPKVERVVVNIGVGEAIQNPKALDGAVNDLSIISGQKPVITRARKSIAGFKLREGMAIGCKVTLRGERMYDFLDRLINLALPRVRDFRGVSPQAFDGRGNYSLGIKEQTIFPEIDYDKIDKIRGLEVVVVTTAKTDEEARELLKSMGMPFR.

Belongs to the universal ribosomal protein uL5 family. In terms of assembly, part of the 50S ribosomal subunit; part of the 5S rRNA/L5/L18/L25 subcomplex. Contacts the 5S rRNA and the P site tRNA. Forms a bridge to the 30S subunit in the 70S ribosome.

In terms of biological role, this is one of the proteins that bind and probably mediate the attachment of the 5S RNA into the large ribosomal subunit, where it forms part of the central protuberance. In the 70S ribosome it contacts protein S13 of the 30S subunit (bridge B1b), connecting the 2 subunits; this bridge is implicated in subunit movement. Contacts the P site tRNA; the 5S rRNA and some of its associated proteins might help stabilize positioning of ribosome-bound tRNAs. The sequence is that of Large ribosomal subunit protein uL5 from Syntrophomonas wolfei subsp. wolfei (strain DSM 2245B / Goettingen).